The sequence spans 573 residues: AP-4 complex accessory subunit Tepsin (573 aa).

The ENTH domain occupies 8-141; that stretch reads RDRLSFLHRL…FSDAVPQPPS (134 aa). Disordered stretches follow at residues 136 to 155 and 194 to 311; these read VPQP…MGAQ and NAVR…NDCQ. The span at 137-150 shows a compositional bias: pro residues; sequence PQPPSQPPQIPPPA. Over residues 217 to 229 the composition is skewed to polar residues; sequence PAVTPSASHTHPN. The span at 260 to 293 shows a compositional bias: low complexity; sequence SSPSSQNSSCTSNLSRASDSGSRSGSDSHSGTSR. Positions 294 to 303 are enriched in basic and acidic residues; it reads EPGDLAERAE. Ser-400 carries the phosphoserine modification. The disordered stretch occupies residues 497–526; the sequence is CSSEQGTESEQRLENTDTPEDSSSPLPWSP. The interval 526–536 is interaction with AP4B1; sequence PNSLFAGMELV. The interaction with AP4E1 stretch occupies residues 563–573; sequence SEPSAFAFLNM.

Interacts with AP4B1 and AP4E1; the interaction is direct and mediates the association of TEPSIN with the adapter-like complex 4 (AP-4), a heterotetramer composed of AP4B1, AP4E1, AP4M1 and AP4S1.

The protein localises to the golgi apparatus. It localises to the trans-Golgi network membrane. Its subcellular location is the cytoplasmic vesicle. It is found in the cytoplasm. The protein resides in the cytosol. Its function is as follows. Associates with the adapter-like complex 4 (AP-4) and may therefore play a role in vesicular trafficking of proteins at the trans-Golgi network. The chain is AP-4 complex accessory subunit Tepsin from Mus musculus (Mouse).